A 206-amino-acid chain; its full sequence is Ribosomal RNA large subunit methyltransferase E (206 aa).

S-adenosyl-L-methionine contacts are provided by Gly54, Trp56, Asp76, Asp94, and Asp118. Catalysis depends on Lys158, which acts as the Proton acceptor.

It belongs to the class I-like SAM-binding methyltransferase superfamily. RNA methyltransferase RlmE family.

The protein resides in the cytoplasm. It carries out the reaction uridine(2552) in 23S rRNA + S-adenosyl-L-methionine = 2'-O-methyluridine(2552) in 23S rRNA + S-adenosyl-L-homocysteine + H(+). In terms of biological role, specifically methylates the uridine in position 2552 of 23S rRNA at the 2'-O position of the ribose in the fully assembled 50S ribosomal subunit. The polypeptide is Ribosomal RNA large subunit methyltransferase E (Methanosphaera stadtmanae (strain ATCC 43021 / DSM 3091 / JCM 11832 / MCB-3)).